We begin with the raw amino-acid sequence, 400 residues long: Forkhead box protein Q1 (400 aa).

The disordered stretch occupies residues 1-112 (MKLEVFVPRA…EGARSKPYTR (112 aa)). Positions 32 to 54 (LSAAGDDSLGSDGDCAANSPAAG) are enriched in low complexity. Gly residues-rich tracts occupy residues 55-66 (SGAGDLEGGGGE) and 95-104 (CAGGVGGGEG). Positions 115-210 (KPPYSYIALI…ADGVFRRRRK (96 aa)) form a DNA-binding region, fork-head. The tract at residues 213-264 (SHRTTVSASGLRPEEAPPGPAGTPQPAPAARSSPIARSPARQEERSSPASKF) is disordered. Residues 228–239 (APPGPAGTPQPA) are compositionally biased toward pro residues. Positions 240 to 251 (PAARSSPIARSP) are enriched in low complexity.

Expressed in kidney and stomach. Expression in the outer medulla of the kidney and the transitional epithelium. Expressed in the hair follicle medulla.

It is found in the nucleus. Plays a role in hair follicle differentiation. This chain is Forkhead box protein Q1 (Foxq1), found in Mus musculus (Mouse).